We begin with the raw amino-acid sequence, 627 residues long: DNA-directed RNA polymerase subunit gamma (627 aa).

Positions 70, 72, 85, and 88 each coordinate Zn(2+). Residues Asp-468, Asp-470, and Asp-472 each coordinate Mg(2+).

Belongs to the RNA polymerase beta' chain family. RpoC1 subfamily. In cyanobacteria the RNAP catalytic core is composed of 2 alpha, 1 beta, 1 beta', 1 gamma and 1 omega subunit. When a sigma factor is associated with the core the holoenzyme is formed, which can initiate transcription. Mg(2+) serves as cofactor. Zn(2+) is required as a cofactor.

It carries out the reaction RNA(n) + a ribonucleoside 5'-triphosphate = RNA(n+1) + diphosphate. DNA-dependent RNA polymerase catalyzes the transcription of DNA into RNA using the four ribonucleoside triphosphates as substrates. This chain is DNA-directed RNA polymerase subunit gamma, found in Synechococcus sp. (strain JA-3-3Ab) (Cyanobacteria bacterium Yellowstone A-Prime).